The chain runs to 93 residues: Large ribosomal subunit protein uL23cy (93 aa).

Belongs to the universal ribosomal protein uL23 family. As to quaternary structure, part of the 50S ribosomal subunit.

It localises to the plastid. The protein localises to the chloroplast. Its function is as follows. Binds to 23S rRNA. The polypeptide is Large ribosomal subunit protein uL23cy (rpl23-B) (Sorghum bicolor (Sorghum)).